The sequence spans 421 residues: Serine hydroxymethyltransferase (421 aa).

Residues Leu-121 and 125–127 each bind (6S)-5,6,7,8-tetrahydrofolate; that span reads GHL. Lys-229 bears the N6-(pyridoxal phosphate)lysine mark.

It belongs to the SHMT family. Homodimer. The cofactor is pyridoxal 5'-phosphate.

Its subcellular location is the cytoplasm. It carries out the reaction (6R)-5,10-methylene-5,6,7,8-tetrahydrofolate + glycine + H2O = (6S)-5,6,7,8-tetrahydrofolate + L-serine. It functions in the pathway one-carbon metabolism; tetrahydrofolate interconversion. Its pathway is amino-acid biosynthesis; glycine biosynthesis; glycine from L-serine: step 1/1. Catalyzes the reversible interconversion of serine and glycine with tetrahydrofolate (THF) serving as the one-carbon carrier. This reaction serves as the major source of one-carbon groups required for the biosynthesis of purines, thymidylate, methionine, and other important biomolecules. Also exhibits THF-independent aldolase activity toward beta-hydroxyamino acids, producing glycine and aldehydes, via a retro-aldol mechanism. The protein is Serine hydroxymethyltransferase of Haemophilus influenzae (strain PittEE).